The chain runs to 89 residues: Small ribosomal subunit protein uS19 (89 aa).

This sequence belongs to the universal ribosomal protein uS19 family.

In terms of biological role, protein S19 forms a complex with S13 that binds strongly to the 16S ribosomal RNA. This Ruthia magnifica subsp. Calyptogena magnifica protein is Small ribosomal subunit protein uS19.